Consider the following 503-residue polypeptide: Maturase K (503 aa).

The protein belongs to the intron maturase 2 family. MatK subfamily.

The protein localises to the plastid. Its subcellular location is the chloroplast. Usually encoded in the trnK tRNA gene intron. Probably assists in splicing its own and other chloroplast group II introns. This is Maturase K from Stangeria eriopus (Natal grass cycad).